A 566-amino-acid chain; its full sequence is Acyl-CoA synthetase ALT10 (566 aa).

196 to 207 (MLFTSGTTGAPK) contributes to the AMP binding site. Positions 473 to 551 (EVEHAALSHE…DAVHYNRTGK (79 aa)) are AMP-binding.

Belongs to the ATP-dependent AMP-binding enzyme family.

It participates in mycotoxin biosynthesis. Functionally, acyl-CoA synthetase; part of the gene cluster that mediates the biosynthesis of the host-selective toxins (HSTs) AAL-toxins, sphinganine-analog mycotoxins responsible for Alternaria stem canker on tomato by the tomato pathotype. The biosynthesis starts with the polyketide synthase ALT1-catalyzed C-16 carbon chain assembly from one starter acetyl-CoA unit with malonyl-CoA extender units. ALT1 also selectively transfers methyl groups at the first and the third cycle of chain elongation for AAL toxin. The C-16 polyketide chain is released from the enzyme by a nucleophilic attack of a carbanion, which is derived from R-carbon of glycin by decarboxylation, on the carbonyl carbon of polyketide acyl chain. This step is probably catalyzed by a pyridoxal 5'-phosphate-dependent aminoacyl transferase ALT4. The respective functions of the other enzymes encoded by the cluster have still to be elucidated. The sphingosine N-acyltransferase-like protein ALT7 seems not to act as a resistance/self-tolerance factor against the toxin in the toxin biosynthetic gene cluster, contrary to what is expected. The chain is Acyl-CoA synthetase ALT10 from Alternaria alternata (Alternaria rot fungus).